Consider the following 232-residue polypeptide: Transcriptional regulatory protein CpxR (232 aa).

The 113-residue stretch at 3-115 (KILLVDDDRE…ELVARIRAIL (113 aa)) folds into the Response regulatory domain. Residue D51 is modified to 4-aspartylphosphate. The segment at residues 131–230 (SPTLEVDALV…LRGRGYLMVS (100 aa)) is a DNA-binding region (ompR/PhoB-type).

In terms of processing, phosphorylated by CpxA.

It is found in the cytoplasm. Its function is as follows. Member of the two-component regulatory system CpxA/CpxR. This system combats a variety of extracytoplasmic protein-mediated toxicities. It performs this function by increasing the synthesis of the periplasmic protease, DegP as well as that of CpxP protein. The protein is Transcriptional regulatory protein CpxR (cpxR) of Escherichia coli O157:H7.